The sequence spans 692 residues: Vacuolar amino acid transporter 3 (692 aa).

The span at Met-1–Gln-14 shows a compositional bias: polar residues. A disordered region spans residues Met-1–Leu-71. The segment covering Ser-15 to Gly-24 has biased composition (low complexity). Polar residues predominate over residues Gly-28–Thr-38. Phosphoserine is present on residues Ser-59, Ser-119, and Ser-121. Disordered stretches follow at residues Lys-135 to Lys-170 and Asp-258 to Pro-294. Low complexity predominate over residues Pro-141–Pro-153. Positions Ala-154–Ser-167 are enriched in polar residues. Ser-165 is subject to Phosphoserine. Residues Asp-258–Glu-279 are compositionally biased toward acidic residues. 11 helical membrane-spanning segments follow: residues Ala-302–Phe-322, Phe-329–Ile-349, Phe-374–Phe-394, Gly-412–Leu-432, Ala-443–Tyr-463, Trp-483–Ile-503, Ala-519–Phe-539, Val-561–Ile-581, Tyr-607–Leu-627, Phe-630–Leu-650, and Leu-665–Gln-685.

Belongs to the amino acid/polyamine transporter 2 family.

It localises to the vacuole membrane. In terms of biological role, involved in amino acid efflux from the vacuole to the cytoplasm. Capable of transporting large neutral amino acids including tyrosine, glutamine, asparagine, isoleucine and leucine. The chain is Vacuolar amino acid transporter 3 (AVT3) from Saccharomyces cerevisiae (strain ATCC 204508 / S288c) (Baker's yeast).